Here is a 338-residue protein sequence, read N- to C-terminus: Gibberellin 2-beta-dioxygenase 8 (338 aa).

The Fe2OG dioxygenase domain maps to 191 to 290 (NTCYLRMNRY…RFSTAYFMCP (100 aa)). Residues His215, Asp217, and His271 each contribute to the Fe cation site. Arg281 is an active-site residue. Arg281 contacts 2-oxoglutarate.

It belongs to the iron/ascorbate-dependent oxidoreductase family. GA2OX subfamily. It depends on Fe(2+) as a cofactor.

It catalyses the reaction gibberellin A1 + 2-oxoglutarate + O2 = gibberellin A8 + succinate + CO2. It functions in the pathway plant hormone biosynthesis; gibberellin biosynthesis. Its function is as follows. Catalyzes the 2-beta-hydroxylation of gibberellins (GA) precursors, rendering them unable to be converted to active GAs. Hydroxylates the C20-GA GA12 and GA53, but is not active on C19-GAs, like GA1, GA4, GA9 and GA20. The sequence is that of Gibberellin 2-beta-dioxygenase 8 (GA2OX8) from Arabidopsis thaliana (Mouse-ear cress).